Here is a 177-residue protein sequence, read N- to C-terminus: Probable phospholipid hydroperoxide glutathione peroxidase (177 aa).

Cysteine 42 is an active-site residue.

The protein belongs to the glutathione peroxidase family.

It localises to the cytoplasm. The catalysed reaction is a hydroperoxy polyunsaturated fatty acid + 2 glutathione = a hydroxy polyunsaturated fatty acid + glutathione disulfide + H2O. Its function is as follows. Protects cells and enzymes from oxidative damage, by catalyzing the reduction of hydrogen peroxide, lipid peroxides and organic hydroperoxide, by glutathione. This chain is Probable phospholipid hydroperoxide glutathione peroxidase, found in Encephalitozoon cuniculi (strain GB-M1) (Microsporidian parasite).